Consider the following 304-residue polypeptide: Acetyl-coenzyme A carboxylase carboxyl transferase subunit beta (304 aa).

The 270-residue stretch at 25–294 (LWIKCPETGE…EAARRESGSQ (270 aa)) folds into the CoA carboxyltransferase N-terminal domain.

The protein belongs to the AccD/PCCB family. Acetyl-CoA carboxylase is a heterohexamer composed of biotin carboxyl carrier protein (AccB), biotin carboxylase (AccC) and two subunits each of ACCase subunit alpha (AccA) and ACCase subunit beta (AccD).

Its subcellular location is the cytoplasm. It carries out the reaction N(6)-carboxybiotinyl-L-lysyl-[protein] + acetyl-CoA = N(6)-biotinyl-L-lysyl-[protein] + malonyl-CoA. Its pathway is lipid metabolism; malonyl-CoA biosynthesis; malonyl-CoA from acetyl-CoA: step 1/1. Functionally, component of the acetyl coenzyme A carboxylase (ACC) complex. Biotin carboxylase (BC) catalyzes the carboxylation of biotin on its carrier protein (BCCP) and then the CO(2) group is transferred by the transcarboxylase to acetyl-CoA to form malonyl-CoA. In Sinorhizobium fredii (strain NBRC 101917 / NGR234), this protein is Acetyl-coenzyme A carboxylase carboxyl transferase subunit beta.